Reading from the N-terminus, the 168-residue chain is Photosystem I assembly protein Ycf3 (168 aa).

TPR repeat units follow at residues 35–68, 72–105, and 120–153; these read AFTYYRDGMSAQSEGNYAEALQNYYEATRLEIDP, SYILYNIGLIHTSNGEHTKALEYYSRALERNPFL, and GEQAIRQGDSEIAEAWSDQAAEYWKQAIALTPGN.

Belongs to the Ycf3 family.

The protein localises to the plastid. The protein resides in the chloroplast thylakoid membrane. Its function is as follows. Essential for the assembly of the photosystem I (PSI) complex. May act as a chaperone-like factor to guide the assembly of the PSI subunits. In Buxus microphylla (Littleleaf boxwood), this protein is Photosystem I assembly protein Ycf3.